The sequence spans 544 residues: Putative glycerol-3-phosphate transporter 4 (544 aa).

6 consecutive transmembrane segments (helical) span residues 28 to 47, 121 to 141, 156 to 176, 181 to 201, 218 to 238, and 240 to 260; these read TFRY…YHAS, VAFL…GDSL, FFVG…WFFL, AAGL…GNWF, SVGN…GWGW, and FIAP…FLAA. The segment at 281-313 is disordered; it reads KRDVEEEEEEVEEDLGTDVEGDGEGSSGSGSGY. The span at 285–303 shows a compositional bias: acidic residues; sequence EEEEEEVEEDLGTDVEGDG. The next 7 membrane-spanning stretches (helical) occupy residues 319–339, 342–362, 371–391, 402–422, 428–448, 471–491, and 494–514; these read VGLL…CLFF, LVAY…TIGG, GNLS…CGYI, AAAF…YGGV, ILLM…ITTA, AIID…TGFL, and LGWQ…GLLL.

Belongs to the major facilitator superfamily. Organophosphate:Pi antiporter (OPA) (TC 2.A.1.4) family.

It localises to the membrane. The polypeptide is Putative glycerol-3-phosphate transporter 4 (Arabidopsis thaliana (Mouse-ear cress)).